Reading from the N-terminus, the 424-residue chain is Serine--tRNA ligase 1 (424 aa).

232–234 (TAE) serves as a coordination point for L-serine. 263–265 (RSE) contributes to the ATP binding site. Glu-286 provides a ligand contact to L-serine. 350–353 (EISS) serves as a coordination point for ATP. Ser-386 serves as a coordination point for L-serine.

Belongs to the class-II aminoacyl-tRNA synthetase family. Type-1 seryl-tRNA synthetase subfamily. In terms of assembly, homodimer. The tRNA molecule binds across the dimer.

The protein localises to the cytoplasm. It catalyses the reaction tRNA(Ser) + L-serine + ATP = L-seryl-tRNA(Ser) + AMP + diphosphate + H(+). It carries out the reaction tRNA(Sec) + L-serine + ATP = L-seryl-tRNA(Sec) + AMP + diphosphate + H(+). It functions in the pathway aminoacyl-tRNA biosynthesis; selenocysteinyl-tRNA(Sec) biosynthesis; L-seryl-tRNA(Sec) from L-serine and tRNA(Sec): step 1/1. Functionally, catalyzes the attachment of serine to tRNA(Ser). Is also able to aminoacylate tRNA(Sec) with serine, to form the misacylated tRNA L-seryl-tRNA(Sec), which will be further converted into selenocysteinyl-tRNA(Sec). In Clostridium acetobutylicum (strain ATCC 824 / DSM 792 / JCM 1419 / IAM 19013 / LMG 5710 / NBRC 13948 / NRRL B-527 / VKM B-1787 / 2291 / W), this protein is Serine--tRNA ligase 1.